We begin with the raw amino-acid sequence, 282 residues long: uncharacterized protein (282 aa).

It belongs to the ycf80 family.

It is found in the plastid. The protein localises to the chloroplast. This is an uncharacterized protein from Guillardia theta (Cryptophyte).